Reading from the N-terminus, the 147-residue chain is Secreted RxLR effector protein BLN04 (147 aa).

The signal sequence occupies residues 1–23; sequence MATMRRICFLFVFNLAVATSTQG. Positions 58 to 61 match the dEER motif; that stretch reads SEER. The helical transmembrane segment at 117–137 threads the bilayer; it reads VYIYTILFLSIPIILGVAMYI.

This sequence belongs to the RxLR effector family. In terms of assembly, interacts with host transcription factor NAC069.

The protein resides in the secreted. Its subcellular location is the host membrane. In terms of biological role, secreted effector that inhibits stress-induced relocalization of the transcription factor NAC069 to the nucleus, thus affecting its broad role in abiotic and biotic stress responses. The sequence is that of Secreted RxLR effector protein BLN04 from Bremia lactucae (Lettuce downy mildew).